A 243-amino-acid chain; its full sequence is Octanoyltransferase (243 aa).

One can recognise a BPL/LPL catalytic domain in the interval 49 to 227 (PLAPQAVWLL…SLSDRFGLVW (179 aa)). Residues 91–98 (RGGEVTHH), 158–160 (AIG), and 171–173 (GLA) contribute to the substrate site. Cys189 serves as the catalytic Acyl-thioester intermediate.

The protein belongs to the LipB family.

It localises to the cytoplasm. The catalysed reaction is octanoyl-[ACP] + L-lysyl-[protein] = N(6)-octanoyl-L-lysyl-[protein] + holo-[ACP] + H(+). The protein operates within protein modification; protein lipoylation via endogenous pathway; protein N(6)-(lipoyl)lysine from octanoyl-[acyl-carrier-protein]: step 1/2. Catalyzes the transfer of endogenously produced octanoic acid from octanoyl-acyl-carrier-protein onto the lipoyl domains of lipoate-dependent enzymes. Lipoyl-ACP can also act as a substrate although octanoyl-ACP is likely to be the physiological substrate. The protein is Octanoyltransferase of Prochlorococcus marinus (strain MIT 9313).